The sequence spans 146 residues: MMDIKEIREYLPHRYPFLLVDRVTELDIENKNIRAYKNVSVNEPFFNGHFPEHPIMPGVLIIEAMAQAAGILAFKMLDSKPSDGTLYYFVGSDKLRFRQPVLPGDQLVLEAKFLSSKRQIWKFECKATVDGKAVCSAEIICAERKL.

The active site involves histidine 49.

The protein belongs to the thioester dehydratase family. FabZ subfamily.

It is found in the cytoplasm. It carries out the reaction a (3R)-hydroxyacyl-[ACP] = a (2E)-enoyl-[ACP] + H2O. Involved in unsaturated fatty acids biosynthesis. Catalyzes the dehydration of short chain beta-hydroxyacyl-ACPs and long chain saturated and unsaturated beta-hydroxyacyl-ACPs. This chain is 3-hydroxyacyl-[acyl-carrier-protein] dehydratase FabZ, found in Pseudomonas savastanoi pv. phaseolicola (strain 1448A / Race 6) (Pseudomonas syringae pv. phaseolicola (strain 1448A / Race 6)).